The chain runs to 379 residues: Gonadotropin-releasing hormone II receptor (379 aa).

The Extracellular segment spans residues methionine 1–arginine 40. A helical transmembrane segment spans residues valine 41 to tryptophan 60. The Cytoplasmic segment spans residues serine 61–arginine 76. The helical transmembrane segment at threonine 77–leucine 96 threads the bilayer. The Extracellular segment spans residues aspartate 97–arginine 114. Residue asparagine 101 is glycosylated (N-linked (GlcNAc...) asparagine). Cysteine 113 and cysteine 188 are oxidised to a cystine. The chain crosses the membrane as a helical span at residues threonine 115 to leucine 136. At aspartate 137–tryptophan 160 the chain is on the cytoplasmic side. A helical membrane pass occupies residues glycine 161 to histidine 178. Topologically, residues arginine 179–asparagine 204 are extracellular. Residues leucine 205 to serine 224 traverse the membrane as a helical segment. Over arginine 225–threonine 278 the chain is Cytoplasmic. A helical transmembrane segment spans residues proline 279–valine 297. Topologically, residues proline 298 to histidine 303 are extracellular. The chain crosses the membrane as a helical span at residues isoleucine 304–phenylalanine 323. The Cytoplasmic segment spans residues threonine 324–isoleucine 379.

It belongs to the G-protein coupled receptor 1 family. In terms of processing, phosphorylated on the C-terminal cytoplasmic tail.

It localises to the cell membrane. Functionally, receptor for gonadotropin releasing hormone II (GnRH II). This receptor mediates its action by association with G proteins that activate a phosphatidylinositol-calcium second messenger system. The protein is Gonadotropin-releasing hormone II receptor (GNRHR2) of Chlorocebus aethiops (Green monkey).